Reading from the N-terminus, the 26-residue chain is Phospholipase A2 homolog A1 (26 aa).

In terms of processing, contains 7 disulfide bonds. As to expression, expressed by the venom gland.

Its subcellular location is the secreted. The polypeptide is Phospholipase A2 homolog A1 (Micrurus pyrrhocryptus (Coral snake)).